An 866-amino-acid polypeptide reads, in one-letter code: Protein SEY1 (866 aa).

Residues 1–746 lie on the Cytoplasmic side of the membrane; the sequence is MVSNGHFAYA…KRSAIGGMTQ (746 aa). The region spanning 48–305 is the GB1/RHD3-type G domain; the sequence is GFNYHLISVF…IPADGFAVYA (258 aa). Residue 58 to 65 coordinates GTP; that stretch reads GSQSTGKS. A coiled-coil region spans residues 480 to 506; it reads SNYTQELALYQKDLEKISAQLRKDEMR. Residues 747-767 traverse the membrane as a helical segment; the sequence is IPVYFYILLLALGWNEIIAVL. Residues 768–770 lie on the Lumenal side of the membrane; that stretch reads RNP. Residues 771 to 791 form a helical membrane-spanning segment; that stretch reads VYFFMLFLCSVAAYIIYQLNL. The Cytoplasmic portion of the chain corresponds to 792–866; sequence WGPMVKMAEA…DDEVEGEETW (75 aa). Residues 840–866 form a disordered region; the sequence is SHVRSGRNATKINERDDDDEVEGEETW. Over residues 854–866 the composition is skewed to acidic residues; that stretch reads RDDDDEVEGEETW.

It belongs to the TRAFAC class dynamin-like GTPase superfamily. GB1/RHD3 GTPase family. RHD3 subfamily.

It is found in the endoplasmic reticulum membrane. Cooperates with the reticulon proteins and tubule-shaping DP1 family proteins to generate and maintain the structure of the tubular endoplasmic reticulum network. Has GTPase activity, which is required for its function in ER organization. The chain is Protein SEY1 from Coccidioides immitis (strain RS) (Valley fever fungus).